Reading from the N-terminus, the 873-residue chain is DNA mismatch repair protein MutS (873 aa).

620-627 provides a ligand contact to ATP; it reads GPNMAGKS.

The protein belongs to the DNA mismatch repair MutS family.

This protein is involved in the repair of mismatches in DNA. It is possible that it carries out the mismatch recognition step. This protein has a weak ATPase activity. In Ruminiclostridium cellulolyticum (strain ATCC 35319 / DSM 5812 / JCM 6584 / H10) (Clostridium cellulolyticum), this protein is DNA mismatch repair protein MutS.